The following is a 330-amino-acid chain: Lysophospholipase D GDPD3 (330 aa).

Position 1 (M1) is a topological domain, cytoplasmic. Residues 2–22 (IPLLYFVLPTLGSYVMLSIFF) traverse the membrane as a helical segment. Over 23–200 (LRRPHLLHTP…ANPEMPMAFT (178 aa)) the chain is Extracellular. The region spanning 39-308 (IRLAAHRGGS…DYPTALRHYL (270 aa)) is the GP-PDE domain. Residues E71, D73, and H86 each coordinate a divalent metal cation. The chain crosses the membrane as a helical span at residues 201-221 (IWRSFWILLLYYLGLLPFVSI). Residues 222 to 330 (PEKFFFCFLP…EALSCLSLKK (109 aa)) are Cytoplasmic-facing. The tract at residues 311–330 (QEEETQPPQPEALSCLSLKK) is disordered.

Belongs to the glycerophosphoryl diester phosphodiesterase family. In terms of tissue distribution, highly expressed in stomach and kidney. In stomach detected in the glandular epithelium. Predominantly expressed in the stomach (at protein level).

The protein localises to the membrane. The protein resides in the cytoplasm. Its subcellular location is the perinuclear region. It localises to the endoplasmic reticulum membrane. It catalyses the reaction 1-hexadecanoyl-sn-glycero-3-phosphocholine + H2O = 1-hexadecanoyl-sn-glycero-3-phosphate + choline + H(+). It carries out the reaction 1-O-hexadecyl-sn-glycero-3-phosphocholine + H2O = 1-O-hexadecyl-sn-glycero-3-phosphate + choline + H(+). The enzyme catalyses 1-O-(1Z-octadecenyl)-sn-glycero-3-phospho-N-hexadecanoyl-ethanolamine + H2O = 1-O-(1Z-octadecenyl)-sn-glycero-3-phosphate + N-hexadecanoylethanolamine + H(+). The catalysed reaction is N-(5Z,8Z,11Z,14Z-eicosatetraenoyl)-1-(9Z-octadecenoyl)-sn-glycero-3-phosphoethanolamine + H2O = N-(5Z,8Z,11Z,14Z-eicosatetraenoyl)-ethanolamine + 1-(9Z-octadecenoyl)-sn-glycero-3-phosphate + H(+). It catalyses the reaction N,1-di-(9Z-octadecenoyl)-sn-glycero-3-phosphoethanolamine + H2O = N-(9Z-octadecenoyl) ethanolamine + 1-(9Z-octadecenoyl)-sn-glycero-3-phosphate + H(+). It carries out the reaction N-hexadecanoyl-1-(9Z-octadecenoyl)-sn-glycero-3-phosphoethanolamine + H2O = N-hexadecanoylethanolamine + 1-(9Z-octadecenoyl)-sn-glycero-3-phosphate + H(+). The enzyme catalyses 1-hexadecanoyl-sn-glycero-3-phosphocholine + H2O = sn-glycerol 3-phosphocholine + hexadecanoate + H(+). Its activity is regulated as follows. Lysophospholipase D activity is stimulated by calcium. Loss of lysophospholipase D activity in presence of EDTA. Functionally, hydrolyzes lysoglycerophospholipids to produce lysophosphatidic acid (LPA) and the corresponding amines. Shows a preference for 1-O-alkyl-sn-glycero-3-phosphocholine (lyso-PAF), lysophosphatidylcholine (lyso-PC) and N-acylethanolamine lysophospholipids. Does not display glycerophosphodiester phosphodiesterase activity, since it cannot hydrolyze either glycerophosphoinositol or glycerophosphocholine. This Mus musculus (Mouse) protein is Lysophospholipase D GDPD3.